A 545-amino-acid polypeptide reads, in one-letter code: MNMAKDIKFSADARAAMVRGVDMLADTVKVTLGPKGRNVVLEKAFGSPLITNDGVTIAKEIELEDHFENMGAKLVSEVASKTNDIAGDGTTTATVLTQAIVHEGLKNVTAGANPIGIRRGIETATATAVEALKAIAQPVSGKEAIAQVAAVSSRSEKVGEYISEAMERVGNDGVITIEESRGMETELEVVEGMQFDRGYLSQYMVTDNEKMVADLENPFILITDKKVSNIQDILPLLEEVLKTNRPLLIIADDVDGEALPTLVLNKIRGTFNVVAVKAPGFGDRRKAMLEDIAILTGGTVITEDLGLELKDATMTALGQAAKITVDKDSTVIVEGSGSSEAIANRIALIKSQLETTTSDFDREKLQERLAKLAGGVAVIKVGAPTETALKEMKLRIEDALNATRAAVEEGIVAGGGTALITVIEKVAALELEGDDATGRNIVLRALEEPVRQIALNAGYEGSVVIDKLKNSPAGTGFNAATGEWVDMIKTGIIDPVKVTRSALQNAASVASLILTTEAVVANKPEPAAPAPAMPAGMDPGMMGGF.

ATP-binding positions include 31–34, 88–92, G415, 478–480, and D494; these read TLGP, DGTTT, and NAA.

Belongs to the chaperonin (HSP60) family. Forms a cylinder of 14 subunits composed of two heptameric rings stacked back-to-back. Interacts with the co-chaperonin GroES.

Its subcellular location is the cytoplasm. It catalyses the reaction ATP + H2O + a folded polypeptide = ADP + phosphate + an unfolded polypeptide.. In terms of biological role, together with its co-chaperonin GroES, plays an essential role in assisting protein folding. The GroEL-GroES system forms a nano-cage that allows encapsulation of the non-native substrate proteins and provides a physical environment optimized to promote and accelerate protein folding. The sequence is that of Chaperonin GroEL from Streptococcus pyogenes serotype M4 (strain MGAS10750).